Reading from the N-terminus, the 475-residue chain is tRNA-2-methylthio-N(6)-dimethylallyladenosine synthase (475 aa).

Residues 1–10 (MQETTVKRDG) are compositionally biased toward basic and acidic residues. The disordered stretch occupies residues 1-22 (MQETTVKRDGASPSDAGTPATT). One can recognise an MTTase N-terminal domain in the interval 27-144 (GKLYIRTFGC…LPDLIKRRRA (118 aa)). [4Fe-4S] cluster contacts are provided by cysteine 36, cysteine 73, cysteine 107, cysteine 181, cysteine 185, and cysteine 188. A Radical SAM core domain is found at 167–400 (RVDGATAFVS…QALINQQAAA (234 aa)). The TRAM domain maps to 403–466 (QGMIGTRQRV…TNSLRGRVAG (64 aa)).

Belongs to the methylthiotransferase family. MiaB subfamily. Monomer. It depends on [4Fe-4S] cluster as a cofactor.

Its subcellular location is the cytoplasm. It catalyses the reaction N(6)-dimethylallyladenosine(37) in tRNA + (sulfur carrier)-SH + AH2 + 2 S-adenosyl-L-methionine = 2-methylsulfanyl-N(6)-dimethylallyladenosine(37) in tRNA + (sulfur carrier)-H + 5'-deoxyadenosine + L-methionine + A + S-adenosyl-L-homocysteine + 2 H(+). Its function is as follows. Catalyzes the methylthiolation of N6-(dimethylallyl)adenosine (i(6)A), leading to the formation of 2-methylthio-N6-(dimethylallyl)adenosine (ms(2)i(6)A) at position 37 in tRNAs that read codons beginning with uridine. This chain is tRNA-2-methylthio-N(6)-dimethylallyladenosine synthase, found in Bordetella parapertussis (strain 12822 / ATCC BAA-587 / NCTC 13253).